A 346-amino-acid polypeptide reads, in one-letter code: NADH-ubiquinone oxidoreductase chain 2 (346 aa).

Helical transmembrane passes span 25–45 (HWVLAWTGLEINTLAIIPLIS), 60–80 (FLTQAAASALVLFSSMTNAWA), 95–115 (CLLLTAAIAIKLGLVPFHFWF), 124–144 (LMTALLLSTLMKFPPLTLLLM), 149–169 (LNPALLTAMALASTALGGWMG), 178–195 (ILAFSSISHLGWIAIILV), 200–219 (LALLTFYLYTIMTSAVFMAL), 247–267 (VLLSLAGLPPLTGFMPKWLII), 274–294 (EMTPAAMAIAMLSLLSLFFYL), and 326–346 (AILASLSILLLPLSPMVHAIV).

The protein belongs to the complex I subunit 2 family.

The protein localises to the mitochondrion inner membrane. It carries out the reaction a ubiquinone + NADH + 5 H(+)(in) = a ubiquinol + NAD(+) + 4 H(+)(out). Its function is as follows. Core subunit of the mitochondrial membrane respiratory chain NADH dehydrogenase (Complex I) that is believed to belong to the minimal assembly required for catalysis. Complex I functions in the transfer of electrons from NADH to the respiratory chain. The immediate electron acceptor for the enzyme is believed to be ubiquinone. This is NADH-ubiquinone oxidoreductase chain 2 (MT-ND2) from Anas capensis (Cape teal).